Consider the following 681-residue polypeptide: Methionine--tRNA ligase (681 aa).

The 'HIGH' region signature appears at 14–24 (PYANGSIHLGH). The Zn(2+) site is built by C145, C148, C158, and C161. A 'KMSKS' region motif is present at residues 331-335 (KMSKS). K334 lines the ATP pocket. A tRNA-binding domain is found at 579–681 (AFAAVDLRIA…AGAKPGQRVH (103 aa)).

Belongs to the class-I aminoacyl-tRNA synthetase family. MetG type 1 subfamily. Homodimer. It depends on Zn(2+) as a cofactor.

Its subcellular location is the cytoplasm. The catalysed reaction is tRNA(Met) + L-methionine + ATP = L-methionyl-tRNA(Met) + AMP + diphosphate. In terms of biological role, is required not only for elongation of protein synthesis but also for the initiation of all mRNA translation through initiator tRNA(fMet) aminoacylation. The polypeptide is Methionine--tRNA ligase (Azotobacter vinelandii (strain DJ / ATCC BAA-1303)).